The chain runs to 336 residues: Protein-arginine N-acetylglucosaminyltransferase SseK1 (336 aa).

N-beta-linked (GlcNAc) arginine; by autocatalysis glycosylation is present at Arg-24. Residues 50 to 52 and Tyr-74 each bind UDP-N-acetyl-alpha-D-glucosamine; that span reads QWF. Arg-152 is a glycosylation site (N-beta-linked (GlcNAc) arginine; by autocatalysis). The short motif at 223–225 is the DXD motif element; the sequence is DAD. Residue 224 to 225 coordinates UDP-N-acetyl-alpha-D-glucosamine; the sequence is AD. Asp-225 serves as a coordination point for Mn(2+). Residue Glu-255 is the Proton acceptor of the active site. 2 residues coordinate Mn(2+): Asn-322 and Ser-324. The UDP-N-acetyl-alpha-D-glucosamine site is built by Ser-324 and Ser-329. An N-beta-linked (GlcNAc) arginine; by autocatalysis glycan is attached at Arg-333.

It belongs to the glycosyltransferase NleB family. The cofactor is Mn(2+). Post-translationally, auto-glycosylated: arginine GlcNAcylation is required for activity toward death domain-containing host target proteins.

Its subcellular location is the secreted. The protein resides in the host cytoplasm. The protein localises to the host cytosol. It carries out the reaction L-arginyl-[protein] + UDP-N-acetyl-alpha-D-glucosamine = N(omega)-(N-acetyl-beta-D-glucosaminyl)-L-arginyl-[protein] + UDP + H(+). Protein-arginine N-acetylglucosaminyltransferase activity is inhibited by 100066N compound (flavone analog) and 102644N compound (a substituted isoxazole). In terms of biological role, protein-arginine N-acetylglucosaminyltransferase effector that disrupts TNF signaling in infected cells, including NF-kappa-B signaling, apoptosis and necroptosis. Acts by catalyzing the transfer of a single N-acetylglucosamine (GlcNAc) to a conserved arginine residue in the death domain of host proteins TRADD and, to a lower extent, FADD: arginine GlcNAcylation prevents homotypic/heterotypic death domain interactions and assembly of the oligomeric TNF-alpha receptor complex, thereby disrupting TNF signaling. Also acts on host proteins without a death domain: catalyzes arginine GlcNAcylation of host GAPDH protein, thereby preventing GAPDH interaction with TRAF2, leading to inhibit NF-kappa-B signaling. Catalyzes GlcNAcylation of host tubulin-folding cofactor TBCB, thereby promoting microtubule stability. Also mediates auto-GlcNAcylation, which is required for activity toward death domain-containing host target proteins. In Salmonella enteritidis (strain 2009K0958), this protein is Protein-arginine N-acetylglucosaminyltransferase SseK1.